A 128-amino-acid polypeptide reads, in one-letter code: Fluoride-specific ion channel FluC 1 (128 aa).

4 helical membrane passes run 10–30 (VAFF…AFSF), 32–52 (GTVI…YFFL), 59–79 (AWLT…FSSF), and 93–113 (FGAL…AWAG). Residues Gly71 and Thr74 each coordinate Na(+).

Belongs to the fluoride channel Fluc/FEX (TC 1.A.43) family.

It is found in the cell membrane. It catalyses the reaction fluoride(in) = fluoride(out). With respect to regulation, na(+) is not transported, but it plays an essential structural role and its presence is essential for fluoride channel function. In terms of biological role, fluoride-specific ion channel. Important for reducing fluoride concentration in the cell, thus reducing its toxicity. The protein is Fluoride-specific ion channel FluC 1 of Lactobacillus delbrueckii subsp. bulgaricus (strain ATCC 11842 / DSM 20081 / BCRC 10696 / JCM 1002 / NBRC 13953 / NCIMB 11778 / NCTC 12712 / WDCM 00102 / Lb 14).